Consider the following 311-residue polypeptide: Beta-ketoacyl-[acyl-carrier-protein] synthase III (311 aa).

Active-site residues include Cys114 and His238. The tract at residues 239–243 is ACP-binding; the sequence is QANIR. Residue Asn268 is part of the active site.

It belongs to the thiolase-like superfamily. FabH family. As to quaternary structure, homodimer.

The protein localises to the cytoplasm. The enzyme catalyses malonyl-[ACP] + acetyl-CoA + H(+) = 3-oxobutanoyl-[ACP] + CO2 + CoA. It functions in the pathway lipid metabolism; fatty acid biosynthesis. Catalyzes the condensation reaction of fatty acid synthesis by the addition to an acyl acceptor of two carbons from malonyl-ACP. Catalyzes the first condensation reaction which initiates fatty acid synthesis and may therefore play a role in governing the total rate of fatty acid production. Possesses both acetoacetyl-ACP synthase and acetyl transacylase activities. Its substrate specificity determines the biosynthesis of branched-chain and/or straight-chain of fatty acids. This chain is Beta-ketoacyl-[acyl-carrier-protein] synthase III, found in Neorickettsia sennetsu (strain ATCC VR-367 / Miyayama) (Ehrlichia sennetsu).